Reading from the N-terminus, the 514-residue chain is 2,3-bisphosphoglycerate-independent phosphoglycerate mutase (514 aa).

Residues aspartate 14 and serine 64 each coordinate Mn(2+). The active-site Phosphoserine intermediate is the serine 64. Substrate is bound by residues histidine 125, 155–156, arginine 187, arginine 193, 263–266, and lysine 336; these read RD and RADR. 5 residues coordinate Mn(2+): aspartate 403, histidine 407, aspartate 444, histidine 445, and histidine 463.

Belongs to the BPG-independent phosphoglycerate mutase family. As to quaternary structure, monomer. It depends on Mn(2+) as a cofactor.

The enzyme catalyses (2R)-2-phosphoglycerate = (2R)-3-phosphoglycerate. Its pathway is carbohydrate degradation; glycolysis; pyruvate from D-glyceraldehyde 3-phosphate: step 3/5. Functionally, catalyzes the interconversion of 2-phosphoglycerate and 3-phosphoglycerate. This is 2,3-bisphosphoglycerate-independent phosphoglycerate mutase from Shewanella sp. (strain W3-18-1).